A 496-amino-acid polypeptide reads, in one-letter code: RNA-binding motif protein, Y chromosome, family 1 member D (496 aa).

The region spanning 8–85 (GKLFIGGLNR…KAIKVEQAKK (78 aa)) is the RRM domain. 2 disordered regions span residues 67-349 (DMNG…HRDY) and 452-496 (KDQR…SSRY). Composition is skewed to low complexity over residues 97–114 (PASS…SARG) and 149–159 (PVKRGPSSRSG). Polar residues predominate over residues 175–184 (NSWMGSQGPM). Composition is skewed to basic and acidic residues over residues 204–214 (RNDRMSTRHDG), 242–253 (DNGHSNRDEHSS), 276–289 (AYRD…DESY), 313–326 (GYRD…HESY), 335–349 (SSRE…HRDY), and 484–496 (GESR…SSRY).

In terms of assembly, interacts with splicing factor proteins SFRS3/SRP20, TRA2B/SFRS10, KHDRBS1/SAM68 and KHDRBS3. In terms of tissue distribution, testis-specific.

It is found in the nucleus. Its function is as follows. RNA-binding protein which may be involved in spermatogenesis. Required for sperm development, possibly by participating in pre-mRNA splicing in the testis. This chain is RNA-binding motif protein, Y chromosome, family 1 member D (RBMY1D), found in Homo sapiens (Human).